We begin with the raw amino-acid sequence, 155 residues long: Zinc finger HIT domain-containing protein 3 (155 aa).

Zn(2+)-binding residues include Cys11, Cys14, Cys22, Cys25, Cys30, Cys34, His38, and Cys42. The HIT-type zinc finger occupies Cys11–Cys42. Ser80 is modified (phosphoserine).

As to quaternary structure, thyroid receptor interacting proteins (TRIPs) specifically interact with the ligand binding domain of the thyroid receptor (TR). Requires the presence of thyroid hormone for its interaction. Interacts with NUFIP1. Interacts (via HIT-type zinc finger) with the RUVBL1/RUVBL2 complex in the presence of ADP.

It is found in the cytoplasm. The protein resides in the nucleus. The sequence is that of Zinc finger HIT domain-containing protein 3 (ZNHIT3) from Homo sapiens (Human).